The following is a 432-amino-acid chain: Glutamate--tRNA ligase 2 (432 aa).

Residues 6 to 16 (PSPTGDMHIGN) carry the 'HIGH' region motif. A 'KMSKS' region motif is present at residues 235–239 (KMSKR). Lys238 is an ATP binding site.

The protein belongs to the class-I aminoacyl-tRNA synthetase family. Glutamate--tRNA ligase type 1 subfamily. As to quaternary structure, monomer.

The protein localises to the cytoplasm. It catalyses the reaction tRNA(Glu) + L-glutamate + ATP = L-glutamyl-tRNA(Glu) + AMP + diphosphate. Functionally, catalyzes the attachment of glutamate to tRNA(Glu) in a two-step reaction: glutamate is first activated by ATP to form Glu-AMP and then transferred to the acceptor end of tRNA(Glu). This Sulfurimonas denitrificans (strain ATCC 33889 / DSM 1251) (Thiomicrospira denitrificans (strain ATCC 33889 / DSM 1251)) protein is Glutamate--tRNA ligase 2.